Here is a 142-residue protein sequence, read N- to C-terminus: Trafficking protein particle complex subunit 1 (142 aa).

Belongs to the TRAPP small subunits family. BET5 subfamily. In terms of assembly, part of the multisubunit TRAPP (transport protein particle) complex.

Its subcellular location is the golgi apparatus. It localises to the cis-Golgi network. The protein resides in the endoplasmic reticulum. May play a role in vesicular transport from endoplasmic reticulum to Golgi. The chain is Trafficking protein particle complex subunit 1 (trappc1-1) from Dictyostelium discoideum (Social amoeba).